Consider the following 718-residue polypeptide: Protein Smaug homolog 1 (718 aa).

Phosphoserine is present on Ser168. Disordered stretches follow at residues 278–323 (ARGP…EEGS), 416–474 (KAYS…LQPH), and 572–601 (NRGF…QYQI). The SAM domain maps to 323-391 (SGMKDVPAWL…ERQNLLKSLE (69 aa)). Residue Ser420 is modified to Phosphoserine. At Thr424 the chain carries Phosphothreonine. A compositionally biased stretch (low complexity) spans 453–466 (GAAATGATATPSAG). Arg573 bears the Omega-N-methylarginine mark. Position 580 is a phosphoserine (Ser580).

This sequence belongs to the SMAUG family.

The protein localises to the cytoplasm. It localises to the cell projection. Its subcellular location is the dendrite. It is found in the synapse. The protein resides in the synaptosome. In terms of biological role, acts as a translational repressor of SRE-containing messengers. In Homo sapiens (Human), this protein is Protein Smaug homolog 1 (SAMD4A).